The following is an 804-amino-acid chain: Phenylalanine--tRNA ligase beta subunit (804 aa).

The tRNA-binding domain maps to 40-155 (GEGIKGVVIG…GDAETGADAL (116 aa)). Positions 409–484 (IKENVIRLSV…RLYGYDNIPS (76 aa)) constitute a B5 domain. The Mg(2+) site is built by D462, D468, E471, and E472. The FDX-ACB domain occupies 710 to 803 (PKYPSVTRDI…LEDKYQAVLR (94 aa)).

The protein belongs to the phenylalanyl-tRNA synthetase beta subunit family. Type 1 subfamily. As to quaternary structure, tetramer of two alpha and two beta subunits. The cofactor is Mg(2+).

The protein resides in the cytoplasm. The enzyme catalyses tRNA(Phe) + L-phenylalanine + ATP = L-phenylalanyl-tRNA(Phe) + AMP + diphosphate + H(+). The protein is Phenylalanine--tRNA ligase beta subunit of Bacillus licheniformis (strain ATCC 14580 / DSM 13 / JCM 2505 / CCUG 7422 / NBRC 12200 / NCIMB 9375 / NCTC 10341 / NRRL NRS-1264 / Gibson 46).